We begin with the raw amino-acid sequence, 470 residues long: MTITAPFDNSYARLPAVFYTRLKPTPVRDPSLIAYNEPLGDILGISAADAAERAAVFSGAKLPEGAAPLAQLYAGHQFGNFNPQLGDGRAILLGEVIGTDGKRYDVQLKGSGPTPYSRMGDGRAWLGPVLREYVVSEAMHALGVPTTRALAATLTGEDVLRETVLPGAVLTRVAASHLRVGTFQIFAHRRQIDALKELTDYAIARHAPDADGPLGLLRAVCAAQAELVAGWMSLGFIHGVMNTDNSAISGETIDYGPCAFMDVYHPDTVFSSIDQTGRYAYSNQPRIAVWNMAQLATALLQQMDDPEAAVEEATQIVHAMPTQIEAAWLDRMGKKIGIAKATPEDTPLIEGLLKLMQEQKADFTNTFDALARSDARDQFLDRDAFDEWCAQWRARLSTQSNPSAVMQAASPRVIPRNHRVEEMIAAAVQGDYAPFERLLKACTDPFNTDDTDLMRPPTKDEIVPATFCGT.

ATP is bound by residues glycine 86, glycine 88, arginine 89, lysine 109, aspartate 121, glycine 122, arginine 172, and arginine 179. The active-site Proton acceptor is aspartate 244. Mg(2+) contacts are provided by asparagine 245 and aspartate 254. Aspartate 254 is an ATP binding site.

It belongs to the SELO family. Requires Mg(2+) as cofactor. The cofactor is Mn(2+).

The enzyme catalyses L-seryl-[protein] + ATP = 3-O-(5'-adenylyl)-L-seryl-[protein] + diphosphate. The catalysed reaction is L-threonyl-[protein] + ATP = 3-O-(5'-adenylyl)-L-threonyl-[protein] + diphosphate. It catalyses the reaction L-tyrosyl-[protein] + ATP = O-(5'-adenylyl)-L-tyrosyl-[protein] + diphosphate. It carries out the reaction L-histidyl-[protein] + UTP = N(tele)-(5'-uridylyl)-L-histidyl-[protein] + diphosphate. The enzyme catalyses L-seryl-[protein] + UTP = O-(5'-uridylyl)-L-seryl-[protein] + diphosphate. The catalysed reaction is L-tyrosyl-[protein] + UTP = O-(5'-uridylyl)-L-tyrosyl-[protein] + diphosphate. In terms of biological role, nucleotidyltransferase involved in the post-translational modification of proteins. It can catalyze the addition of adenosine monophosphate (AMP) or uridine monophosphate (UMP) to a protein, resulting in modifications known as AMPylation and UMPylation. In Roseobacter denitrificans (strain ATCC 33942 / OCh 114) (Erythrobacter sp. (strain OCh 114)), this protein is Protein nucleotidyltransferase YdiU.